The chain runs to 608 residues: MELVLCFVIITISGVIRESSALLLRSPTSNDVFGELVASAERAQPLATRLTKRISRLNFNDREDDFWEDHGDASWNNSYTLVNGRTTLGSENRRRPASHSLIERPYYRDGRLSPVLGVQERRGRSVHSYHEEPVSFFDQRAFDEYTFRRRSQLHRQRARAGLRSRIKQNVRRLWTSARGAVRGWGRRVRRKIGDLFVGHLMPQLRRLRFWDQGLPPVVPPLIGNEPGQASVALVAERMEARLREKTLTEKNPTEAQQAVGTYLINSAENTWFISIPGGRYILLKKRGFLGGGGFGLVYHVEHPTTGQPFALKIFVQRVMNNEVGDKISDLIEDEFGVMKYFPPEWTPARMYSELRFMVPLLKLRVLGKPEFQDARNHLRIFSVCALFPKAQGDLEEAAALLADMDRTNAYNMRMSSTIQMVKLLARFHAFGLVHGDVKLQNFLVDKSGLLLLSDFTQILRTNERRYPPVVTVLYMSPEIATCLITRLRNAIPYTAEIDSWMLGISLYRLWCGDFPFGITLDATALQVAGIVIRSSASSLDFASCHDIPEQFREMIVGFLRKTPGVRLSPQQALEQFSLLNWKGPSPASDTASESEPVSTEEAALLQKE.

Residues M1–A21 form the signal peptide. N76 is a glycosylation site (N-linked (GlcNAc...) asparagine). In terms of domain architecture, Protein kinase spans L283 to L579. ATP contacts are provided by residues L289–V297 and K312. D436 serves as the catalytic Proton acceptor.

This sequence belongs to the protein kinase superfamily. Ser/Thr protein kinase family. In terms of assembly, interacts with ROP5; interaction with ROP5 does not affect kinase activity. Interacts with human BCL2; the interaction probably promotes BCL2 phosphorylation and degradation.

It is found in the secreted. It localises to the cytoplasmic vesicle. The protein localises to the secretory vesicle. The protein resides in the rhoptry. Its subcellular location is the parasitophorous vacuole membrane. The catalysed reaction is L-threonyl-[protein] + ATP = O-phospho-L-threonyl-[protein] + ADP + H(+). It carries out the reaction L-seryl-[protein] + ATP = O-phospho-L-seryl-[protein] + ADP + H(+). Protein kinase. Virulence factor. Promotes migration of Toxoplasma-infected macrophages through collagen matrix, facilitating parasite transport through tissues and systemic dissemination. Plays a role in the translocation of dense granule effectors, such as GRA16 and GRA24, across the parasitophorous vacuole membrane in Toxoplasma-infected host cells. Phosphorylates mouse IRGB6 (TGTP1/TGTP2), an immunity-related GTPase (IRG) that protects mice from infection by certain intracellular pathogens; the phosphorylation leads to the disassembly of IRGB6 polymers into monomers and dimers. May modulate gene expression in human cells. Promotes autophagy in human cells via modulation of the BCL2-BECN1 pathway. The sequence is that of Serine/threonine-protein kinase ROP17 from Toxoplasma gondii.